The following is a 413-amino-acid chain: Multifunctional CCA protein (413 aa).

Gly-8 and Arg-11 together coordinate ATP. 2 residues coordinate CTP: Gly-8 and Arg-11. The Mg(2+) site is built by Asp-21 and Asp-23. Arg-91, Arg-137, and Arg-140 together coordinate ATP. CTP-binding residues include Arg-91, Arg-137, and Arg-140. The HD domain maps to 228-329 (TGVHTLMTLS…VKLFDAIDAW (102 aa)).

It belongs to the tRNA nucleotidyltransferase/poly(A) polymerase family. Bacterial CCA-adding enzyme type 1 subfamily. Monomer. Can also form homodimers and oligomers. Mg(2+) serves as cofactor. It depends on Ni(2+) as a cofactor.

The enzyme catalyses a tRNA precursor + 2 CTP + ATP = a tRNA with a 3' CCA end + 3 diphosphate. The catalysed reaction is a tRNA with a 3' CCA end + 2 CTP + ATP = a tRNA with a 3' CCACCA end + 3 diphosphate. Functionally, catalyzes the addition and repair of the essential 3'-terminal CCA sequence in tRNAs without using a nucleic acid template. Adds these three nucleotides in the order of C, C, and A to the tRNA nucleotide-73, using CTP and ATP as substrates and producing inorganic pyrophosphate. tRNA 3'-terminal CCA addition is required both for tRNA processing and repair. Also involved in tRNA surveillance by mediating tandem CCA addition to generate a CCACCA at the 3' terminus of unstable tRNAs. While stable tRNAs receive only 3'-terminal CCA, unstable tRNAs are marked with CCACCA and rapidly degraded. The polypeptide is Multifunctional CCA protein (Salmonella schwarzengrund (strain CVM19633)).